A 332-amino-acid chain; its full sequence is MAKVYIDKDASLDPIKDKTIAVLGYGSQGRAWALNLRDSGLKVLVGLEREGNSWKVAESDGFNPMHTEDAVKKSDIVIFLVPDMVQRYVYRERVAPYLRDGMDLVFAHGFNIHYKLIEPPKTVDVYMIAPKGPGPIVREYFAKGGGVPALVAVHQNYSGKAFEKALAIAKALGATRAGVIETTFKEETETDLFGEQVDLVGGITQLMRTAFQVLVEAGYQPEIAYYETINEMKMIVDLIYEKGFTGMLKAVSETAKYGGFTAGKYVINEDVKKRMKEVLDRIRSGKFAEEWIEEYNKGAPTLVNGMKEVENSLEEQVGRQIREISLRGKPKS.

In terms of domain architecture, KARI N-terminal Rossmann spans Ala-2–Thr-182. NADP(+) contacts are provided by residues Tyr-25–Gln-28, Ser-53, and Asp-83–Gln-86. His-108 is a catalytic residue. Gly-134 is a binding site for NADP(+). Residues Thr-183–Gly-328 enclose the KARI C-terminal knotted domain. Residues Asp-191, Glu-195, Glu-227, and Glu-231 each coordinate Mg(2+). Ser-252 contributes to the substrate binding site.

This sequence belongs to the ketol-acid reductoisomerase family. Mg(2+) is required as a cofactor.

It catalyses the reaction (2R)-2,3-dihydroxy-3-methylbutanoate + NADP(+) = (2S)-2-acetolactate + NADPH + H(+). The enzyme catalyses (2R,3R)-2,3-dihydroxy-3-methylpentanoate + NADP(+) = (S)-2-ethyl-2-hydroxy-3-oxobutanoate + NADPH + H(+). The protein operates within amino-acid biosynthesis; L-isoleucine biosynthesis; L-isoleucine from 2-oxobutanoate: step 2/4. It functions in the pathway amino-acid biosynthesis; L-valine biosynthesis; L-valine from pyruvate: step 2/4. In terms of biological role, involved in the biosynthesis of branched-chain amino acids (BCAA). Catalyzes an alkyl-migration followed by a ketol-acid reduction of (S)-2-acetolactate (S2AL) to yield (R)-2,3-dihydroxy-isovalerate. In the isomerase reaction, S2AL is rearranged via a Mg-dependent methyl migration to produce 3-hydroxy-3-methyl-2-ketobutyrate (HMKB). In the reductase reaction, this 2-ketoacid undergoes a metal-dependent reduction by NADPH to yield (R)-2,3-dihydroxy-isovalerate. The sequence is that of Ketol-acid reductoisomerase (NADP(+)) from Sulfurisphaera tokodaii (strain DSM 16993 / JCM 10545 / NBRC 100140 / 7) (Sulfolobus tokodaii).